The sequence spans 386 residues: MKEVVVVDCIRTPMGRSKGGIFRNVRAETLSAHLMSKLIERNPNLDPNEIEDIIWGCVQQTKEQGFNIARNAQLLTDIPRSVAAVTVNRLCGSSMQALHDATSGIMSGRGDVYMIGGVEHMGHVPMDFNIDFHPGIAKTAARASGSMGMTAELLGRQNGISREMQDAFGARSHQKAHAAAVEGRWNEIVATEGHDADGILKLIDADETIRPDSTTESMSGLRPVFDPVNGTVTAGTSSALSDGASAMLIMSADKAKALGLTPRAKIRAMAVAGCDAAIMGFGPVPATQKALKRAGMTMADIELAEFNEAFAAQALSCIKQLGWLDTYEDKVNLNGGAIALGHPLGCSGSRISTTLINLMEANDKSIGLATMCIGLGQGIATVFERV.

Catalysis depends on Cys91, which acts as the Acyl-thioester intermediate. Active-site proton acceptor residues include His342 and Cys372.

Belongs to the thiolase-like superfamily. Thiolase family. In terms of assembly, heterotetramer of two alpha chains (FadB) and two beta chains (FadA).

It localises to the cytoplasm. The catalysed reaction is an acyl-CoA + acetyl-CoA = a 3-oxoacyl-CoA + CoA. It functions in the pathway lipid metabolism; fatty acid beta-oxidation. In terms of biological role, catalyzes the final step of fatty acid oxidation in which acetyl-CoA is released and the CoA ester of a fatty acid two carbons shorter is formed. In Pseudoalteromonas atlantica (strain T6c / ATCC BAA-1087), this protein is 3-ketoacyl-CoA thiolase.